The sequence spans 364 residues: Putative agmatine deiminase (364 aa).

Cysteine 355 functions as the Amidino-cysteine intermediate in the catalytic mechanism.

It belongs to the agmatine deiminase family.

It carries out the reaction agmatine + H2O = N-carbamoylputrescine + NH4(+). This Mycoplasma capricolum subsp. capricolum (strain California kid / ATCC 27343 / NCTC 10154) protein is Putative agmatine deiminase.